A 492-amino-acid chain; its full sequence is ERAD-associated E3 ubiquitin-protein ligase HRD1A (492 aa).

Residues 1–3 are Cytoplasmic-facing; the sequence is MIR. Residues 4–24 traverse the membrane as a helical segment; sequence LRTYAGLSFMATLAVIYHAFS. At 25–40 the chain is on the lumenal side; that stretch reads SRGQFYPATVYLSTSK. The helical transmembrane segment at 41–61 threads the bilayer; the sequence is ISLVLLLNMCLVLMLSLWHLV. Topologically, residues 62-98 are cytoplasmic; the sequence is KFVFLGSLREAEVERLNEQAWRELMEILFAITIFRQD. A helical transmembrane segment spans residues 99 to 119; it reads FSSGFLPLVVTLLLIKALHWL. At 120 to 135 the chain is on the lumenal side; it reads AQKRVEYIETTPSVSK. The chain crosses the membrane as a helical span at residues 136–156; that stretch reads LSHFRIVSFMGFLLLVDSLFM. Residues 157–170 are Cytoplasmic-facing; that stretch reads YSSIRHLIQSRQAS. Residues 171–191 form a helical membrane-spanning segment; that stretch reads VSLFFSFEYMILATTTVAIFV. The Lumenal segment spans residues 192-221; sequence KYVFYVTDMLMDGQWEKKPVYTFYLELIRD. A helical membrane pass occupies residues 222–242; sequence LLHLSMYICFFFVIFMNYGVP. Over 243 to 492 the chain is Cytoplasmic; the sequence is LHLLRELYET…KGKSVADAAE (250 aa). Residues 292–330 form an RING-type; atypical zinc finger; that stretch reads CIICREEMTNAKKLICGHLFHVHCLRSWLERQQTCPTCR. Disordered regions lie at residues 339-379 and 470-492; these read ATSA…NSLS and ETRK…DAAE. Residues 351 to 378 show a composition bias toward low complexity; the sequence is QGSQQGTSSSGNQGSEISSSAGVSNNSL. Basic and acidic residues predominate over residues 470–486; it reads ETRKPESAGEPENKGKS.

This sequence belongs to the HRD1 family.

The protein localises to the endoplasmic reticulum membrane. It carries out the reaction S-ubiquitinyl-[E2 ubiquitin-conjugating enzyme]-L-cysteine + [acceptor protein]-L-lysine = [E2 ubiquitin-conjugating enzyme]-L-cysteine + N(6)-ubiquitinyl-[acceptor protein]-L-lysine.. It participates in protein modification; protein ubiquitination. Functionally, probable component of the HRD1 ubiquitin ligase complex that mediates the rapid degradation of misfolded endoplasmic reticulum (ER) proteins, a process called ER-associated degradation (ERAD). Targets the misfolded LRR receptor kinase BRI1. Functions redundantly with HRD3B. In Arabidopsis thaliana (Mouse-ear cress), this protein is ERAD-associated E3 ubiquitin-protein ligase HRD1A.